A 244-amino-acid polypeptide reads, in one-letter code: Phosphoadenosine 5'-phosphosulfate reductase (244 aa).

C239 (nucleophile; cysteine thiosulfonate intermediate) is an active-site residue.

Belongs to the PAPS reductase family. CysH subfamily.

The protein localises to the cytoplasm. It catalyses the reaction [thioredoxin]-disulfide + sulfite + adenosine 3',5'-bisphosphate + 2 H(+) = [thioredoxin]-dithiol + 3'-phosphoadenylyl sulfate. The protein operates within sulfur metabolism; hydrogen sulfide biosynthesis; sulfite from sulfate: step 3/3. In terms of biological role, catalyzes the formation of sulfite from phosphoadenosine 5'-phosphosulfate (PAPS) using thioredoxin as an electron donor. This Sodalis glossinidius (strain morsitans) protein is Phosphoadenosine 5'-phosphosulfate reductase.